The sequence spans 614 residues: Replication protein A 70 kDa DNA-binding subunit (614 aa).

The interval Gly-112–Gln-178 is disordered. Composition is skewed to polar residues over residues Gly-120 to Thr-130 and Pro-158 to Gln-178. The OB DNA-binding region spans Trp-194–Asn-278. A C4-type zinc finger spans residues Cys-478–Cys-500.

Belongs to the replication factor A protein 1 family. As to quaternary structure, component of the heterotrimeric canonical replication protein A complex (RPA).

The protein resides in the nucleus. It localises to the PML body. As part of the heterotrimeric replication protein A complex (RPA/RP-A), binds and stabilizes single-stranded DNA intermediates, that form during DNA replication or upon DNA stress. It prevents their reannealing and in parallel, recruits and activates different proteins and complexes involved in DNA metabolism. Thereby, it plays an essential role both in DNA replication and the cellular response to DNA damage. This Gallus gallus (Chicken) protein is Replication protein A 70 kDa DNA-binding subunit (RPA1).